Reading from the N-terminus, the 342-residue chain is Anthranilate phosphoribosyltransferase (342 aa).

5-phospho-alpha-D-ribose 1-diphosphate is bound by residues Gly-84, 87–88 (GD), Thr-92, 94–97 (NIST), 112–120 (KHGNRGVSS), and Ser-124. Gly-84 contacts anthranilate. Ser-96 is a binding site for Mg(2+). Asn-115 is an anthranilate binding site. Arg-170 provides a ligand contact to anthranilate. Mg(2+) contacts are provided by Asp-229 and Glu-230.

The protein belongs to the anthranilate phosphoribosyltransferase family. In terms of assembly, homodimer. The cofactor is Mg(2+).

It carries out the reaction N-(5-phospho-beta-D-ribosyl)anthranilate + diphosphate = 5-phospho-alpha-D-ribose 1-diphosphate + anthranilate. Its pathway is amino-acid biosynthesis; L-tryptophan biosynthesis; L-tryptophan from chorismate: step 2/5. Its function is as follows. Catalyzes the transfer of the phosphoribosyl group of 5-phosphorylribose-1-pyrophosphate (PRPP) to anthranilate to yield N-(5'-phosphoribosyl)-anthranilate (PRA). The protein is Anthranilate phosphoribosyltransferase of Cupriavidus metallidurans (strain ATCC 43123 / DSM 2839 / NBRC 102507 / CH34) (Ralstonia metallidurans).